A 296-amino-acid chain; its full sequence is Ribosomal protein L11 methyltransferase (296 aa).

Positions 145, 166, 188, and 230 each coordinate S-adenosyl-L-methionine.

Belongs to the methyltransferase superfamily. PrmA family.

Its subcellular location is the cytoplasm. The enzyme catalyses L-lysyl-[protein] + 3 S-adenosyl-L-methionine = N(6),N(6),N(6)-trimethyl-L-lysyl-[protein] + 3 S-adenosyl-L-homocysteine + 3 H(+). Its function is as follows. Methylates ribosomal protein L11. This Photorhabdus laumondii subsp. laumondii (strain DSM 15139 / CIP 105565 / TT01) (Photorhabdus luminescens subsp. laumondii) protein is Ribosomal protein L11 methyltransferase.